Reading from the N-terminus, the 325-residue chain is Phospholipid phosphatase-related protein type 1 (325 aa).

3 consecutive transmembrane segments (helical) span residues 11 to 31 (YSII…TVLL), 67 to 87 (FISP…IIFI), and 127 to 147 (FIGV…AGQV). The N-linked (GlcNAc...) asparagine glycan is linked to N163. A run of 3 helical transmembrane segments spans residues 201–218 (AALS…ITST), 230–247 (VLCL…LNRV), and 257–277 (VIGG…CVVH). N316 carries an N-linked (GlcNAc...) asparagine glycan.

Belongs to the PA-phosphatase related phosphoesterase family.

Its subcellular location is the cell membrane. It localises to the cell projection. The protein resides in the neuron projection. Functionally, may play a role in neurite outgrowth and neurogenesis. The protein is Phospholipid phosphatase-related protein type 1 of Xenopus tropicalis (Western clawed frog).